We begin with the raw amino-acid sequence, 145 residues long: Hemoglobin subunit beta-2 (145 aa).

Residues 2 to 145 (HLTDQEIKYI…VADAVGKGYH (144 aa)) enclose the Globin domain. Positions 63 and 91 each coordinate heme b.

Belongs to the globin family. Red blood cells.

In Telmatobius peruvianus (Andean frog), this protein is Hemoglobin subunit beta-2.